Here is a 129-residue protein sequence, read N- to C-terminus: Large ribosomal subunit protein uL14m (129 aa).

This sequence belongs to the universal ribosomal protein uL14 family.

Its subcellular location is the mitochondrion. In Acanthamoeba castellanii (Amoeba), this protein is Large ribosomal subunit protein uL14m (RPL14).